Here is a 324-residue protein sequence, read N- to C-terminus: tRNA dimethylallyltransferase (324 aa).

17–24 (GPTASGKT) is an ATP binding site. Residue 19–24 (TASGKT) participates in substrate binding. Interaction with substrate tRNA stretches follow at residues 42 to 45 (DSAL), 166 to 170 (QRIQR), 251 to 256 (RCVGYR), and 284 to 291 (KRQITWLR).

It belongs to the IPP transferase family. Monomer. Mg(2+) serves as cofactor.

It carries out the reaction adenosine(37) in tRNA + dimethylallyl diphosphate = N(6)-dimethylallyladenosine(37) in tRNA + diphosphate. In terms of biological role, catalyzes the transfer of a dimethylallyl group onto the adenine at position 37 in tRNAs that read codons beginning with uridine, leading to the formation of N6-(dimethylallyl)adenosine (i(6)A). The sequence is that of tRNA dimethylallyltransferase from Burkholderia orbicola (strain AU 1054).